We begin with the raw amino-acid sequence, 335 residues long: F420-dependent glucose-6-phosphate dehydrogenase (335 aa).

Aspartate 40 contributes to the coenzyme F420-(gamma-Glu)n binding site. The Proton donor role is filled by histidine 41. Coenzyme F420-(gamma-Glu)n-binding positions include threonine 77 and 108 to 109 (TG). Residue glutamate 110 is the Proton acceptor of the active site. Coenzyme F420-(gamma-Glu)n is bound by residues asparagine 113, 177–178 (GG), and 180–181 (VV). Residues threonine 195, lysine 198, lysine 259, and arginine 283 each contribute to the substrate site.

The protein belongs to the F420-dependent glucose-6-phosphate dehydrogenase family. As to quaternary structure, homodimer.

It catalyses the reaction oxidized coenzyme F420-(gamma-L-Glu)(n) + D-glucose 6-phosphate + H(+) = 6-phospho-D-glucono-1,5-lactone + reduced coenzyme F420-(gamma-L-Glu)(n). Its function is as follows. Catalyzes the coenzyme F420-dependent oxidation of glucose 6-phosphate (G6P) to 6-phosphogluconolactone. This chain is F420-dependent glucose-6-phosphate dehydrogenase, found in Segniliparus rotundus (strain ATCC BAA-972 / CDC 1076 / CIP 108378 / DSM 44985 / JCM 13578).